A 473-amino-acid polypeptide reads, in one-letter code: Ribulose bisphosphate carboxylase large chain (473 aa).

Asn-116 and Thr-166 together coordinate substrate. Lys-168 serves as the catalytic Proton acceptor. Lys-170 is a substrate binding site. Residues Lys-194, Asp-196, and Glu-197 each coordinate Mg(2+). Lys-194 is subject to N6-carboxylysine. Catalysis depends on His-287, which acts as the Proton acceptor. Substrate contacts are provided by Arg-288, His-320, and Ser-372.

The protein belongs to the RuBisCO large chain family. Type I subfamily. In terms of assembly, heterohexadecamer of 8 large chains and 8 small chains. The cofactor is Mg(2+).

The enzyme catalyses 2 (2R)-3-phosphoglycerate + 2 H(+) = D-ribulose 1,5-bisphosphate + CO2 + H2O. The catalysed reaction is D-ribulose 1,5-bisphosphate + O2 = 2-phosphoglycolate + (2R)-3-phosphoglycerate + 2 H(+). Functionally, ruBisCO catalyzes two reactions: the carboxylation of D-ribulose 1,5-bisphosphate, the primary event in carbon dioxide fixation, as well as the oxidative fragmentation of the pentose substrate. Both reactions occur simultaneously and in competition at the same active site. The chain is Ribulose bisphosphate carboxylase large chain from Nitrobacter winogradskyi (Nitrobacter agilis).